The primary structure comprises 446 residues: Nucleoprotein (446 aa).

The segment at 1–54 (MSFTPGKQSSSRASSGNRAGNGILKWADQSDQSSNFQTRGRRAQPKQTATSQPA) is disordered. Low complexity predominate over residues 9–22 (SSSRASSGNRAGNG). 2 stretches are compositionally biased toward polar residues: residues 29–38 (QSDQSSNFQT) and 45–54 (PKQTATSQPA). Positions 52–193 (QPAGGNVVPY…GYYIEGSGRS (142 aa)) are RNA-binding. Residues 60–189 (PYYSWFSGIT…VLPQGYYIEG (130 aa)) enclose the CoV N NTD domain. Residues Arg-105, Arg-121, and Arg-163 each coordinate RNA. Disordered stretches follow at residues 157 to 230 (PADV…VTSD), 265 to 290 (ILNK…KRGP), and 381 to 446 (QQDD…NSEM). Residue Ser-166 is modified to Phosphoserine; by host. Thr-173 is subject to Phosphothreonine; by host. Ser-190 carries the post-translational modification Phosphoserine; by host. Residues 195-226 (PNSRSTSRASSRASSAGSRNRSNSGTRTPTSG) are compositionally biased toward low complexity. A CoV N CTD domain is found at 258–383 (AKEVRQKILN…ENLNAYQQQD (126 aa)). Over residues 265–275 (ILNKPRQKRSP) the composition is skewed to basic residues. The tract at residues 265-384 (ILNKPRQKRS…NLNAYQQQDD (120 aa)) is dimerization. Residues Ser-389 and Ser-421 each carry the phosphoserine; by host modification. Residue Thr-425 is modified to Phosphothreonine; by host.

Belongs to the betacoronavirus nucleocapsid protein family. As to quaternary structure, homooligomer. Both monomeric and oligomeric forms interact with RNA. Interacts with protein M. Interacts with NSP3; this interaction serves to tether the genome to the newly translated replicase-transcriptase complex at a very early stage of infection. ADP-ribosylated. The ADP-ribosylation is retained in the virion during infection. In terms of processing, phosphorylated on serine and threonine residues.

Its subcellular location is the virion. It localises to the host endoplasmic reticulum-Golgi intermediate compartment. The protein resides in the host Golgi apparatus. Functionally, packages the positive strand viral genome RNA into a helical ribonucleocapsid (RNP) and plays a fundamental role during virion assembly through its interactions with the viral genome and membrane protein M. Plays an important role in enhancing the efficiency of subgenomic viral RNA transcription as well as viral replication. The polypeptide is Nucleoprotein (Equine coronavirus (isolate NC99) (ECoV)).